A 99-amino-acid chain; its full sequence is MTKQPKPCSFLFHISLLSALFVFLLISFAFTTSYKLKSGINSLGHKRILASNFDFTPFLKNKDRTQRQRQSPSLTVKENGFWYNDEERVVPSGPNPLHH.

Positions 1–31 are cleaved as a signal peptide; that stretch reads MTKQPKPCSFLFHISLLSALFVFLLISFAFT. P91 and P94 each carry hydroxyproline. An O-linked (Ara...) hydroxyproline glycan is attached at P94.

Belongs to the CLV3/ESR signal peptide family. In terms of processing, the O-glycosylation (arabinosylation) of the hydroxyproline Pro-94 enhances binding affinity of the CLE11p peptide for its receptor. Mostly expressed in seedlings, roots and siliques, and, to a lower extent, in leaves, flowers, stems and apex.

Its subcellular location is the secreted. The protein resides in the extracellular space. Its function is as follows. Extracellular signal peptide that regulates cell fate. Represses root apical meristem maintenance. Regulates the transition of protophloem cells from proliferation to differentiation, thus impinging on postembryonic growth capacity of the root meristem; this signaling pathway requires CRN and CLV2. The sequence is that of CLAVATA3/ESR (CLE)-related protein 11 from Arabidopsis thaliana (Mouse-ear cress).